Reading from the N-terminus, the 357-residue chain is Undecaprenyl-phosphate alpha-N-acetylglucosaminyl 1-phosphate transferase (357 aa).

7 helical membrane-spanning segments follow: residues 40-60 (GAIP…FYLL), 64-84 (QMRL…IGMI), 124-144 (FQLT…IAAI), 183-203 (WSFA…GIPF), 209-229 (VFMG…ILLL), 238-258 (MNPV…IAIM), and 291-311 (FLLI…GEIF).

This sequence belongs to the glycosyltransferase 4 family. WecA subfamily. The cofactor is Mg(2+). It depends on Mn(2+) as a cofactor.

The protein localises to the cell inner membrane. The catalysed reaction is di-trans,octa-cis-undecaprenyl phosphate + UDP-N-acetyl-alpha-D-glucosamine = N-acetyl-alpha-D-glucosaminyl-di-trans,octa-cis-undecaprenyl diphosphate + UMP. It participates in bacterial outer membrane biogenesis; LPS O-antigen biosynthesis. In terms of biological role, catalyzes the transfer of the GlcNAc-1-phosphate moiety from UDP-GlcNAc onto the carrier lipid undecaprenyl phosphate (C55-P), yielding GlcNAc-pyrophosphoryl-undecaprenyl (GlcNAc-PP-C55). This chain is Undecaprenyl-phosphate alpha-N-acetylglucosaminyl 1-phosphate transferase, found in Pasteurella multocida (strain Pm70).